The following is a 190-amino-acid chain: Natural killer cells antigen CD94 (190 aa).

Over 1–10 the chain is Cytoplasmic; it reads MAAFRTTAWR. A helical; Signal-anchor for type II membrane protein transmembrane segment spans residues 11-31; sequence LISGVLGVICLVLMAALGVLL. The Extracellular portion of the chain corresponds to 32-190; the sequence is KNSLTKRSVQ…FRYICKQQLI (159 aa). Intrachain disulfides connect C69/C81, C72/C83, C100/C185, and C163/C177. The 108-residue stretch at 79-186 folds into the C-type lectin domain; sequence YQCNCYFISN…CEKKFRYICK (108 aa). Residues N104 and N144 are each glycosylated (N-linked (GlcNAc...) asparagine).

Can form disulfide-bonded heterodimer with NKG2 family members KLRC1 and KLRC2. KLRD1-KLRC1 heterodimer interacts with peptide-bound MHC-E-B2M heterotrimeric complex. KLRD1 plays a prominent role in directly interacting with MHC-E. KLRD1-KLRC1 interacts with much higher affinity with peptide-bound MHC-E-B2M than KLRD1-KLRC2. Interacts with the adapter protein TYROBP/DAP12; this interaction is required for cell surface expression and cell activation.

It localises to the cell membrane. Its function is as follows. Immune receptor involved in self-nonself discrimination. In complex with KLRC1 or KLRC2 on cytotoxic and regulatory lymphocyte subsets, recognizes non-classical major histocompatibility (MHC) class Ib molecule MHC-E loaded with self-peptides derived from the signal sequence of classical MHC class Ia and non-classical MHC class Ib molecules. Enables cytotoxic cells to monitor the expression of MHC class I molecules in healthy cells and to tolerate self. Primarily functions as a ligand binding subunit as it lacks the capacity to signal. In terms of biological role, KLRD1-KLRC1 acts as an immune inhibitory receptor. Key inhibitory receptor on natural killer (NK) cells that regulates their activation and effector functions. Dominantly counteracts T cell receptor signaling on a subset of memory/effector CD8-positive T cells as part of an antigen-driven response to avoid autoimmunity. On intraepithelial CD8-positive gamma-delta regulatory T cells triggers TGFB1 secretion, which in turn limits the cytotoxic programming of intraepithelial CD8-positive alpha-beta T cells, distinguishing harmless from pathogenic antigens. In MHC-E-rich tumor microenvironment, acts as an immune inhibitory checkpoint and may contribute to progressive loss of effector functions of NK cells and tumor-specific T cells, a state known as cell exhaustion. Upon MHC-E-peptide binding, transmits intracellular signals through KLRC1 immunoreceptor tyrosine-based inhibition motifs (ITIMs) by recruiting INPP5D/SHIP-1 and INPPL1/SHIP-2 tyrosine phosphatases to ITIMs, and ultimately opposing signals transmitted by activating receptors through dephosphorylation of proximal signaling molecules. KLRD1-KLRC2 acts as an immune activating receptor. On cytotoxic lymphocyte subsets recognizes MHC-E loaded with signal sequence-derived peptides from non-classical MHC class Ib MHC-G molecules, likely playing a role in the generation and effector functions of adaptive NK cells and in maternal-fetal tolerance during pregnancy. Regulates the effector functions of terminally differentiated cytotoxic lymphocyte subsets, and in particular may play a role in adaptive NK cell response to viral infection. Upon MHC-E-peptide binding, transmits intracellular signals via the adapter protein TYROBP/DAP12, triggering the phosphorylation of proximal signaling molecules and cell activation. The chain is Natural killer cells antigen CD94 (KLRD1) from Bos taurus (Bovine).